The following is a 378-amino-acid chain: Flagellar P-ring protein 2 (378 aa).

The N-terminal stretch at 1 to 33 is a signal peptide; it reads MHEVSDKTNAIHPLQRVSRALFALGLLCFAAMA.

The protein belongs to the FlgI family. The basal body constitutes a major portion of the flagellar organelle and consists of four rings (L,P,S, and M) mounted on a central rod.

The protein resides in the periplasm. It localises to the bacterial flagellum basal body. In terms of biological role, assembles around the rod to form the L-ring and probably protects the motor/basal body from shearing forces during rotation. This Hahella chejuensis (strain KCTC 2396) protein is Flagellar P-ring protein 2.